The sequence spans 828 residues: Glycerol-3-phosphate acyltransferase 1, mitochondrial (828 aa).

Topologically, residues 1 to 87 (MEESSVTIGT…FFNPSIPSLG (87 aa)) are cytoplasmic. Positions 80-120 (NPSIPSLGLRNVIYINETHTRHRGWLARRLSYILFVQERDV) are important for mitochondrial localization. The stretch at 88 to 118 (LRNVIYINETHTRHRGWLARRLSYILFVQER) is an intramembrane region. The Cytoplasmic portion of the chain corresponds to 119–828 (DVHKGMFATS…LEYILSFVVL (710 aa)). Residues 230 to 235 (HRSHID) carry the HXXXXD motif motif. Residues R278, R279, K288, R293, and R328 each coordinate CoA. Phosphoserine is present on S380. Position 462 (R462) interacts with CoA. A phosphoserine mark is found at S688 and S695. K780 and K784 each carry N6-acetyllysine.

This sequence belongs to the GPAT/DAPAT family.

It localises to the mitochondrion outer membrane. The catalysed reaction is sn-glycerol 3-phosphate + an acyl-CoA = a 1-acyl-sn-glycero-3-phosphate + CoA. The enzyme catalyses sn-glycerol 3-phosphate + hexadecanoyl-CoA = 1-hexadecanoyl-sn-glycero-3-phosphate + CoA. It catalyses the reaction (9Z,12Z)-octadecadienoyl-CoA + sn-glycerol 3-phosphate = 1-(9Z,12Z)-octadecadienoyl-sn-glycero-3-phosphate + CoA. It carries out the reaction sn-glycerol 3-phosphate + (9Z)-octadecenoyl-CoA = 1-(9Z-octadecenoyl)-sn-glycero-3-phosphate + CoA. The catalysed reaction is sn-glycerol 3-phosphate + octadecanoyl-CoA = 1-octadecanoyl-sn-glycero-3-phosphate + CoA. The enzyme catalyses dodecanoyl-CoA + sn-glycerol 3-phosphate = 1-dodecanoyl-sn-glycerol 3-phosphate + CoA. It catalyses the reaction 1-acyl-sn-glycero-3-phospho-(1'-sn-glycerol) + an acyl-CoA = a 1,2-diacyl-sn-glycero-3-phospho-(1'-sn-glycerol) + CoA. Its pathway is phospholipid metabolism; CDP-diacylglycerol biosynthesis; CDP-diacylglycerol from sn-glycerol 3-phosphate: step 1/3. Functionally, mitochondrial membrane protein that catalyzes the essential first step of biosynthesis of glycerolipids such as triglycerides, phosphatidic acids and lysophosphatidic acids. Esterifies acyl-group from acyl-coenzyme A (acyl-CoA) to the sn-1 position of glycerol-3-phosphate, to produce lysophosphatidic acid. Has a narrow hydrophobic binding cleft that selects for a linear acyl chain. Catalytic activity is higher for substrates with a 16-carbon acyl chain. The chain is Glycerol-3-phosphate acyltransferase 1, mitochondrial from Rattus norvegicus (Rat).